Reading from the N-terminus, the 277-residue chain is Pantothenate synthetase (277 aa).

26 to 33 lines the ATP pocket; that stretch reads MGNLHEGH. The active-site Proton donor is H33. Residue Q57 participates in (R)-pantoate binding. Q57 contributes to the beta-alanine binding site. 144–147 serves as a coordination point for ATP; the sequence is GKKD. Q150 is a binding site for (R)-pantoate. ATP-binding positions include G173 and 181 to 184; that span reads LSSR.

This sequence belongs to the pantothenate synthetase family. Homodimer.

Its subcellular location is the cytoplasm. It carries out the reaction (R)-pantoate + beta-alanine + ATP = (R)-pantothenate + AMP + diphosphate + H(+). The protein operates within cofactor biosynthesis; (R)-pantothenate biosynthesis; (R)-pantothenate from (R)-pantoate and beta-alanine: step 1/1. Catalyzes the condensation of pantoate with beta-alanine in an ATP-dependent reaction via a pantoyl-adenylate intermediate. In Chromobacterium violaceum (strain ATCC 12472 / DSM 30191 / JCM 1249 / CCUG 213 / NBRC 12614 / NCIMB 9131 / NCTC 9757 / MK), this protein is Pantothenate synthetase.